The following is a 117-amino-acid chain: Circadian clock oscillator protein KaiB (117 aa).

This sequence belongs to the KaiB family. As to quaternary structure, may undergo a major conformational rearrangment; in the free state forms homooligomers. When bound to KaiC switches to a monomeric thioredoxin-fold (KaiB(fs)). The active oscillator complex is probably KaiC(6):KaiB(6).

Its function is as follows. Component of the KaiBC clock protein complex, which constitutes the main circadian regulator in cyanobacteria; it may modify the ATPase activity of KaiC. May be a metamorphic protein which reversibly switches between an inactive tetrameric fold and a rare, thioredoxin-like monomeric fold (KaiB(fs)). KaiB(fs) binds phospho-KaiC, and perhaps clock output effectors. This Prochlorococcus marinus (strain SARG / CCMP1375 / SS120) protein is Circadian clock oscillator protein KaiB.